A 600-amino-acid polypeptide reads, in one-letter code: UvrABC system protein C (600 aa).

The GIY-YIG domain occupies 15 to 92 (EKPGCYLMKD…IKKYQPYYNV (78 aa)). Residues 197–232 (GAVKQDLTQKMEQASEQLEFERAAEIRDQLKYIEET) enclose the UVR domain.

The protein belongs to the UvrC family. As to quaternary structure, interacts with UvrB in an incision complex.

The protein resides in the cytoplasm. The UvrABC repair system catalyzes the recognition and processing of DNA lesions. UvrC both incises the 5' and 3' sides of the lesion. The N-terminal half is responsible for the 3' incision and the C-terminal half is responsible for the 5' incision. The polypeptide is UvrABC system protein C (Lactobacillus helveticus (strain DPC 4571)).